Here is a 235-residue protein sequence, read N- to C-terminus: MEKRELLYEGKAKKVYKTDEENLYIIEYKDDATAFNGLKKGTIAEKGIVNNKVSAILFALLDKNNVPTHYVKRLSDREMLVKKVEIFPLEVIVRNYAAGSICKRLGLEEGLKFKTPVLEFSYKNDELKDPMINEYHIQALELATKEEIEIMTGMTFKVNEILSEYFLSKDIILVDFKLEFGKSSEGILLADEISPDTCRFWDKNTMEKLDKDRFRKDLGKVEEAYLEILKRLGGM.

The protein belongs to the SAICAR synthetase family.

It carries out the reaction 5-amino-1-(5-phospho-D-ribosyl)imidazole-4-carboxylate + L-aspartate + ATP = (2S)-2-[5-amino-1-(5-phospho-beta-D-ribosyl)imidazole-4-carboxamido]succinate + ADP + phosphate + 2 H(+). Its pathway is purine metabolism; IMP biosynthesis via de novo pathway; 5-amino-1-(5-phospho-D-ribosyl)imidazole-4-carboxamide from 5-amino-1-(5-phospho-D-ribosyl)imidazole-4-carboxylate: step 1/2. This is Phosphoribosylaminoimidazole-succinocarboxamide synthase from Thermoanaerobacter pseudethanolicus (strain ATCC 33223 / 39E) (Clostridium thermohydrosulfuricum).